Consider the following 53-residue polypeptide: Lectin alpha chain (53 aa).

The protein belongs to the leguminous lectin family. In terms of assembly, tetramer of two alpha and two beta chains.

The polypeptide is Lectin alpha chain (Lathyrus clymenum (Spanish vetchling)).